A 203-amino-acid chain; its full sequence is GTP cyclohydrolase-2 (203 aa).

49 to 53 (RIHSE) is a GTP binding site. 3 residues coordinate Zn(2+): Cys54, Cys65, and Cys67. GTP contacts are provided by residues Gln70, 92–94 (EGR), and Thr114. Asp126 serves as the catalytic Proton acceptor. Residue Arg128 is the Nucleophile of the active site. Residues Thr149 and Lys154 each coordinate GTP.

It belongs to the GTP cyclohydrolase II family. Requires Zn(2+) as cofactor.

It catalyses the reaction GTP + 4 H2O = 2,5-diamino-6-hydroxy-4-(5-phosphoribosylamino)-pyrimidine + formate + 2 phosphate + 3 H(+). It functions in the pathway cofactor biosynthesis; riboflavin biosynthesis; 5-amino-6-(D-ribitylamino)uracil from GTP: step 1/4. Functionally, catalyzes the conversion of GTP to 2,5-diamino-6-ribosylamino-4(3H)-pyrimidinone 5'-phosphate (DARP), formate and pyrophosphate. In Shewanella sp. (strain MR-7), this protein is GTP cyclohydrolase-2.